We begin with the raw amino-acid sequence, 76 residues long: Omega-conotoxin MoVIA (76 aa).

The signal sequence occupies residues methionine 1–alanine 22. A propeptide spanning residues aspartate 23–arginine 45 is cleaved from the precursor. 3 disulfides stabilise this stretch: cysteine 46–cysteine 61, cysteine 53–cysteine 64, and cysteine 60–cysteine 71. A hydroxyproline mark is found at proline 49 and proline 55.

It belongs to the conotoxin O1 superfamily. Expressed by the venom duct.

The protein resides in the secreted. Its function is as follows. Omega-conotoxins act at presynaptic membranes, they bind and block voltage-gated calcium channels (Cav). This toxin potently blocks mammalian N-type calcium channels (Cav2.2/CACNA1B) (IC(50)=330 nM on human channels). It is 9-fold more potent in displacing radiolabeled omega-conotoxin GVIA from fish brain membranes than from human SH-SY5Y cells. In terms of biological role, omega-conotoxins act at presynaptic membranes, they bind and block voltage-gated calcium channels (Cav). This toxin potently blocks mammalian N-type calcium channels (Cav2.2/CACNA1B) (IC(50)=600 nM on human channels). It is 60-fold more potent in displacing radiolabeled omega-conotoxin GVIA from fish brain membranes than from human SH-SY5Y cells. In vivo, when tested on rat neuropathic pain model, this toxin shows an analgesic activity. In Conus moncuri (Sea snail), this protein is Omega-conotoxin MoVIA.